The chain runs to 582 residues: Aspartate--tRNA ligase (582 aa).

L-aspartate is bound at residue Glu-174. The aspartate stretch occupies residues 198 to 201; the sequence is QITK. Arg-220 provides a ligand contact to L-aspartate. ATP is bound by residues 220 to 222 and Gln-229; that span reads RDE. Residue His-443 participates in L-aspartate binding. Glu-477 is an ATP binding site. L-aspartate is bound at residue Arg-484. Position 529 to 532 (529 to 532) interacts with ATP; that stretch reads GLDR.

The protein belongs to the class-II aminoacyl-tRNA synthetase family. Type 1 subfamily. In terms of assembly, homodimer.

The protein resides in the cytoplasm. It catalyses the reaction tRNA(Asp) + L-aspartate + ATP = L-aspartyl-tRNA(Asp) + AMP + diphosphate. Its function is as follows. Catalyzes the attachment of L-aspartate to tRNA(Asp) in a two-step reaction: L-aspartate is first activated by ATP to form Asp-AMP and then transferred to the acceptor end of tRNA(Asp). In Streptococcus pyogenes serotype M28 (strain MGAS6180), this protein is Aspartate--tRNA ligase.